We begin with the raw amino-acid sequence, 222 residues long: Putative thymidylate synthase (222 aa).

C139 is a catalytic residue.

Belongs to the thymidylate synthase family. Archaeal-type ThyA subfamily. As to quaternary structure, monomer.

It is found in the cytoplasm. The protein operates within pyrimidine metabolism; dTTP biosynthesis. In terms of biological role, may catalyze the biosynthesis of dTMP using an unknown cosubstrate. The polypeptide is Putative thymidylate synthase (Methanocaldococcus jannaschii (strain ATCC 43067 / DSM 2661 / JAL-1 / JCM 10045 / NBRC 100440) (Methanococcus jannaschii)).